Reading from the N-terminus, the 579-residue chain is Nif-specific regulatory protein (579 aa).

The GAF domain maps to 40–187; sequence DPVAEVPQIF…MVASLLEQAL (148 aa). The Sigma-54 factor interaction domain maps to 226–454; the sequence is IVGSSPAIAE…LENCVNRAAA (229 aa). Residues 254–261 and 317–326 contribute to the ATP site; these read GESGTGKE and ADGGTLFLDE. Residues 464–536 are inter-domain linker; that stretch reads EELACRQGAC…PLRTKTAQLS (73 aa). A divalent metal cation is bound by residues Cys-468 and Cys-473. Positions 502–529 are disordered; the sequence is RVSAPPPEPAPAPEPAPEAPPREEVPLR. Repeat copies occupy residues 505–506, 507–508, 509–510, 511–512, 513–514, 515–516, and 517–518. The segment at 505-518 is 7 X 2 AA tandem repeats of X-P; sequence APPPEPAPAPEPAP. The segment covering 505-520 has biased composition (pro residues); it reads APPPEPAPAPEPAPEA. Residues 537–579 are C-terminal DNA-binding domain; sequence REELLRALESAGWVQAKAARLLGMTPRQIAYALQKFEIELRKI. The segment at residues 551-570 is a DNA-binding region (H-T-H motif); sequence QAKAARLLGMTPRQIAYALQ.

As to quaternary structure, interacts with sigma-54.

In terms of biological role, required for activation of most nif operons, which are directly involved in nitrogen fixation. This is Nif-specific regulatory protein (nifA1) from Rhodobacter capsulatus (strain ATCC BAA-309 / NBRC 16581 / SB1003).